Reading from the N-terminus, the 98-residue chain is Integration host factor subunit beta (98 aa).

The disordered stretch occupies residues 59 to 98; that stretch reads RTGRNPKTGESVTLPGKYVPHFKPGKEMRDRVNESIQSEG. The span at 82 to 91 shows a compositional bias: basic and acidic residues; sequence PGKEMRDRVN.

It belongs to the bacterial histone-like protein family. As to quaternary structure, heterodimer of an alpha and a beta chain.

Functionally, this protein is one of the two subunits of integration host factor, a specific DNA-binding protein that functions in genetic recombination as well as in transcriptional and translational control. This Saccharophagus degradans (strain 2-40 / ATCC 43961 / DSM 17024) protein is Integration host factor subunit beta.